A 109-amino-acid chain; its full sequence is Oncomodulin-2 (109 aa).

EF-hand domains lie at 39–74 and 78–109; these read MSAS…FESG and LTES…MVHS. Ca(2+)-binding residues include D52, D54, S56, Y58, E63, D91, D93, D95, K97, and E102.

It belongs to the parvalbumin family.

This is Oncomodulin-2 (OCM2) from Homo sapiens (Human).